Consider the following 748-residue polypeptide: E3 ubiquitin-protein ligase DTX3L (748 aa).

Ala-2 carries the post-translational modification N-acetylalanine. A Phosphoserine modification is found at Ser-9. Disordered regions lie at residues 94–117 (DLRP…PSLT), 209–238 (EQKR…PPDQ), and 528–562 (QETP…PAAS). Residues 101 to 117 (SLTQPVETPSSRPPSLT) are compositionally biased toward polar residues. Basic and acidic residues-rich tracts occupy residues 209–219 (EQKRKGSEQKR) and 227–236 (TPPDVEREPP). A Phosphoserine modification is found at Ser-215. Ser-536 carries the post-translational modification Phosphoserine. The RING-type zinc finger occupies 569–608 (CVICMDTISNKHVLPKCKHEFCTSCISKAMLIKPVCPVCL).

This sequence belongs to the Deltex family. Homodimer and heterodimer. Can heterodimerize with DTX1, enhancing its ubiquitin ligase activity in vitro. Interacts (via N-terminus) with ADP ribosyltransferase PARP9/BAL1 (via PARP catalytic domain) forming a stable complex; the interaction is required to activate PARP9 but is dispensable for DTX3L catalytic activity. Forms a complex with STAT1 and PARP9 independently of IFNB1 or IFNG-mediated STAT1 'Tyr-701' phosphorylation. Found in a complex with PARP9, STAT1 and H2BC9. Found in a complex with E3 ligase ITCH and ESCRT-0 components HGS and STAM. Interacts (via C-terminus) with ITCH; the interaction is increased upon CXCL12 stimulation and inhibits ITCH catalytic activity; the interaction is direct. Interacts with HGS and STAM; the interaction brings together HGS and STAM and promotes their recruitment to early endosomes. Post-translationally, autoubiquitinated.

The protein resides in the cytoplasm. It localises to the nucleus. The protein localises to the early endosome membrane. It is found in the lysosome membrane. It carries out the reaction S-ubiquitinyl-[E2 ubiquitin-conjugating enzyme]-L-cysteine + [acceptor protein]-L-lysine = [E2 ubiquitin-conjugating enzyme]-L-cysteine + N(6)-ubiquitinyl-[acceptor protein]-L-lysine.. The protein operates within protein modification; protein ubiquitination. Binding to PARP9 enhances DTX3L catalytic activity. Functionally, E3 ubiquitin-protein ligase which, in association with ADP-ribosyltransferase PARP9, plays a role in DNA damage repair and in interferon-mediated antiviral responses. Monoubiquitinates several histones, including histone H2A, H2B, H3 and H4. In response to DNA damage, mediates monoubiquitination of 'Lys-91' of histone H4 (H4K91ub1). The exact role of H4K91ub1 in DNA damage response is still unclear but it may function as a licensing signal for additional histone H4 post-translational modifications such as H4 'Lys-20' methylation (H4K20me). PARP1-dependent PARP9-DTX3L-mediated ubiquitination promotes the rapid and specific recruitment of 53BP1/TP53BP1, UIMC1/RAP80, and BRCA1 to DNA damage sites. By monoubiquitinating histone H2B H2BC9/H2BJ and thereby promoting chromatin remodeling, positively regulates STAT1-dependent interferon-stimulated gene transcription and thus STAT1-mediated control of viral replication. Independently of its catalytic activity, promotes the sorting of chemokine receptor CXCR4 from early endosome to lysosome following CXCL12 stimulation by reducing E3 ligase ITCH activity and thus ITCH-mediated ubiquitination of endosomal sorting complex required for transport ESCRT-0 components HGS and STAM. In addition, required for the recruitment of HGS and STAM to early endosomes. This chain is E3 ubiquitin-protein ligase DTX3L (Dtx3l), found in Mus musculus (Mouse).